Reading from the N-terminus, the 224-residue chain is MAARSLWAVQRLQRLLASGAMSESRGWLHPFSTATQRTAGEDCSSEDPPDGLGPSLAEQALRLKAVKLEKEVQDLTLRYQRAVADCENIRRRTQRCVEDAKIFGIQSFCKDLVEVADILEKTAKCCSEGAEPEDHRRTLEKVFQGLSLLEARLKSVFTKHGLEKMTPIGDKYDPHEHELICHMPAGVGVQPGTVALVRQDGYKLHGRTIRLAQVEVAVESQRRL.

Residues 1-31 constitute a mitochondrion transit peptide; sequence MAARSLWAVQRLQRLLASGAMSESRGWLHPF. Lys-141 is modified (N6-acetyllysine).

The protein belongs to the GrpE family. Probable component of the PAM complex at least composed of a mitochondrial HSP70 protein, GRPEL1 or GRPEL2, TIMM44, TIMM16/PAM16 and TIMM14/DNAJC19. Ubiquitous.

It localises to the mitochondrion matrix. Its function is as follows. Essential component of the PAM complex, a complex required for the translocation of transit peptide-containing proteins from the inner membrane into the mitochondrial matrix in an ATP-dependent manner. Seems to control the nucleotide-dependent binding of mitochondrial HSP70 to substrate proteins. Stimulates ATPase activity of mt-HSP70. May also serve to modulate the interconversion of oligomeric (inactive) and monomeric (active) forms of mt-HSP70. The sequence is that of GrpE protein homolog 2, mitochondrial (Grpel2) from Mus musculus (Mouse).